Here is a 545-residue protein sequence, read N- to C-terminus: Chaperonin GroEL (545 aa).

ATP is bound by residues 30 to 33, K51, 87 to 91, G415, and D495; these read TLGP and DGTTT.

This sequence belongs to the chaperonin (HSP60) family. As to quaternary structure, forms a cylinder of 14 subunits composed of two heptameric rings stacked back-to-back. Interacts with the co-chaperonin GroES.

The protein localises to the cytoplasm. It carries out the reaction ATP + H2O + a folded polypeptide = ADP + phosphate + an unfolded polypeptide.. Its function is as follows. Together with its co-chaperonin GroES, plays an essential role in assisting protein folding. The GroEL-GroES system forms a nano-cage that allows encapsulation of the non-native substrate proteins and provides a physical environment optimized to promote and accelerate protein folding. In Yersinia pestis bv. Antiqua (strain Antiqua), this protein is Chaperonin GroEL.